The sequence spans 170 residues: Cathelicidin antimicrobial peptide (170 aa).

The first 30 residues, Met-1–Ala-30, serve as a signal peptide directing secretion. The propeptide at Gln-31–Arg-131 is cathelin-like domain (CLD). Disulfide bonds link Cys-86–Cys-97 and Cys-108–Cys-125. Positions Phe-150 to Gln-162 are active core.

The protein belongs to the cathelicidin family. As to quaternary structure, monomer, homodimer or homotrimer (in vitro). Oligomerizes as tetra- or hexamer in solution (in vitro). In terms of processing, proteolytically cleaved by proteinase PRTN3 into antibacterial peptide LL-37. Proteolytically cleaved by cathepsin CTSG and neutrophil elastase ELANE. Resistant to proteolytic degradation in solution, and when bound to both zwitterionic (mimicking mammalian membranes) and negatively charged membranes (mimicking bacterial membranes). Post-translationally, after secretion onto the skin surface, the CAMP gene product is processed by a serine protease-dependent mechanism into multiple novel antimicrobial peptides distinct from and shorter than cathelicidin LL-37. These peptides show enhanced antimicrobial action, acquiring the ability to kill skin pathogens such as S.aureus, E.coli and C.albicans. These peptides have lost the ability to stimulate CXCL8/IL8 release from keratinocytes. The peptides act synergistically, killing bacteria at lower concentrations when present together, and maintain activity at increased salt condition.

Its subcellular location is the secreted. The protein resides in the vesicle. In terms of biological role, antimicrobial protein that is an integral component of the innate immune system. Binds to bacterial lipopolysaccharides (LPS). Acts via neutrophil N-formyl peptide receptors to enhance the release of CXCL2. Postsecretory processing generates multiple cathelicidin antimicrobial peptides with various lengths which act as a topical antimicrobial defense in sweat on skin. The unprocessed precursor form, cathelicidin antimicrobial peptide, inhibits the growth of Gram-negative E.coli and E.aerogenes with efficiencies comparable to that of the mature peptide LL-37 (in vitro). Its function is as follows. Antimicrobial peptide that is an integral component of the innate immune system. Binds to bacterial lipopolysaccharides (LPS). Causes membrane permeabilization by forming transmembrane pores (in vitro). Causes lysis of E.coli. Exhibits antimicrobial activity against Gram-negative bacteria such as P.aeruginosa, S.typhimurium, E.aerogenes, E.coli and P.syringae, Gram-positive bacteria such as L.monocytogenes, S.epidermidis, S.pyogenes and S.aureus, as well as vancomycin-resistant enterococci (in vitro). Exhibits antimicrobial activity against methicillin-resistant S.aureus, P.mirabilis, and C.albicans in low-salt media, but not in media containing 100 mM NaCl (in vitro). Forms chiral supramolecular assemblies with quinolone signal (PQS) molecules of P.aeruginosa, which may lead to interference of bacterial quorum signaling and perturbance of bacterial biofilm formation. May form supramolecular fiber-like assemblies on bacterial membranes. Induces cytokine and chemokine producation as well as TNF/TNFA and CSF2/GMCSF production in normal human keratinocytes. Exhibits hemolytic activity against red blood cells. Functionally, exhibits antimicrobial activity against E.coli and B.megaterium (in vitro). The polypeptide is Cathelicidin antimicrobial peptide (Nomascus gabriellae (Red-cheeked gibbon)).